Here is a 259-residue protein sequence, read N- to C-terminus: MSGVCLLIDAGNSRIKWALADTGRHFVTSGAFEHADDTPDWSTLPAPRGAWISNVAGDAAAARIDALIDAHWPALPRTVVRACAAQCGVTNGYAEPARLGSDRWAGLIGAHAAFPGEHLLIATFGTATTLEALRADGRFTGGLIAPGWALMMRSLGMHTAQLPTVSIDAATSLLDELAANDAHAPFAIDTPHALSAGCLQAQAGLIERAWRDLEKAWKAPVRLVLSGGAADAIVRALTVPHTRHDTLVLTGLALIAHSA.

Asp-9–Lys-16 provides a ligand contact to ATP. Substrate contacts are provided by residues Tyr-93 and Gly-100–Arg-103. Asp-102 functions as the Proton acceptor in the catalytic mechanism. Thr-126 provides a ligand contact to ATP. A substrate-binding site is contributed by Thr-190.

Belongs to the type III pantothenate kinase family. As to quaternary structure, homodimer. NH4(+) is required as a cofactor. The cofactor is K(+).

It is found in the cytoplasm. It catalyses the reaction (R)-pantothenate + ATP = (R)-4'-phosphopantothenate + ADP + H(+). It participates in cofactor biosynthesis; coenzyme A biosynthesis; CoA from (R)-pantothenate: step 1/5. Its function is as follows. Catalyzes the phosphorylation of pantothenate (Pan), the first step in CoA biosynthesis. This is Type III pantothenate kinase from Burkholderia thailandensis (strain ATCC 700388 / DSM 13276 / CCUG 48851 / CIP 106301 / E264).